A 208-amino-acid chain; its full sequence is Small ribosomal subunit protein uS4 (208 aa).

Positions 98–160 (RRLDNVVYRL…SKSKTRFVEI (63 aa)) constitute an S4 RNA-binding domain.

This sequence belongs to the universal ribosomal protein uS4 family. Part of the 30S ribosomal subunit. Contacts protein S5. The interaction surface between S4 and S5 is involved in control of translational fidelity.

Its function is as follows. One of the primary rRNA binding proteins, it binds directly to 16S rRNA where it nucleates assembly of the body of the 30S subunit. With S5 and S12 plays an important role in translational accuracy. The chain is Small ribosomal subunit protein uS4 from Caldicellulosiruptor bescii (strain ATCC BAA-1888 / DSM 6725 / KCTC 15123 / Z-1320) (Anaerocellum thermophilum).